A 205-amino-acid polypeptide reads, in one-letter code: MAINYPAGTRRRTAQAKNTMRTGKTTKKALTFGKRGMGLEDEINLANDYYLANHLAVIHKKPTPITIVKVDYPARSAAKITEAYFKQASTTDYNGVYQGRYIDFDAKETKNKTSFPLKNFHEHQIVHLANVLSQNGVGFVIIKFTSLDESYIYPAQALIRQWEKLRGKQSIAYQDIIAEGYRVPESLNPSLDYLKAVDQYFENLN.

The tract at residues 1–22 is disordered; sequence MAINYPAGTRRRTAQAKNTMRT. Mg(2+)-binding residues include Thr90, Asp92, Asp105, and Gln124.

The protein belongs to the RecU family. Mg(2+) serves as cofactor.

Its subcellular location is the cytoplasm. It carries out the reaction Endonucleolytic cleavage at a junction such as a reciprocal single-stranded crossover between two homologous DNA duplexes (Holliday junction).. Its function is as follows. Endonuclease that resolves Holliday junction intermediates in genetic recombination. Cleaves mobile four-strand junctions by introducing symmetrical nicks in paired strands. Promotes annealing of linear ssDNA with homologous dsDNA. Required for DNA repair, homologous recombination and chromosome segregation. The polypeptide is Holliday junction resolvase RecU (Leuconostoc citreum (strain KM20)).